We begin with the raw amino-acid sequence, 155 residues long: UPF0225 protein PC1_1977 (155 aa).

It belongs to the UPF0225 family.

The protein is UPF0225 protein PC1_1977 of Pectobacterium carotovorum subsp. carotovorum (strain PC1).